Consider the following 261-residue polypeptide: MWVPVVFLTLSVTWIGAAPLILSRIVGGWECEKHSQPWQVLVASRGRAVCGGVLVHPQWVLTAAHCIRNKSVILLGRHSLFHPEDTGQVFQVSHSFPHPLYDMSLLKNRFLRPGDDSSHDLMLLRLSEPAELTDAVKVMDLPTQEPALGTTCYASGWGSIEPEEFLTPKKLQCVDLHVISNDVCAQVHPQKVTKFMLCAGRWTGGKSTCSGDSGGPLVCNGVLQGITSWGSEPCALPERPSLYTKVVHYRKWIKDTIVANP.

Positions 1–17 are cleaved as a signal peptide; the sequence is MWVPVVFLTLSVTWIGA. Positions 18–24 are cleaved as a propeptide — activation peptide; the sequence is APLILSR. Positions 25-258 constitute a Peptidase S1 domain; the sequence is IVGGWECEKH…YRKWIKDTIV (234 aa). 5 disulfides stabilise this stretch: Cys31–Cys173, Cys50–Cys66, Cys152–Cys219, Cys184–Cys198, and Cys209–Cys234. Residue His65 is the Charge relay system of the active site. N-linked (GlcNAc...) asparagine glycosylation occurs at Asn69. Asp120 (charge relay system) is an active-site residue. The active-site Charge relay system is Ser213.

Belongs to the peptidase S1 family. Kallikrein subfamily. As to quaternary structure, forms a heterodimer with SERPINA5.

The protein localises to the secreted. The enzyme catalyses Preferential cleavage: -Tyr-|-Xaa-.. With respect to regulation, inhibited by SERPINA5. Activity is strongly inhibited by Zn2+, 100 times more abundant in semen than in serum. This inhibition is relieved by exposure to semenogelins, which are avid zinc binders. Hydrolyzes semenogelin-1 thus leading to the liquefaction of the seminal coagulum. This is Prostate-specific antigen (KLK3) from Homo sapiens (Human).